Here is a 133-residue protein sequence, read N- to C-terminus: Small ribosomal subunit protein uS8 (133 aa).

Belongs to the universal ribosomal protein uS8 family. Part of the 30S ribosomal subunit. Contacts proteins S5 and S12.

One of the primary rRNA binding proteins, it binds directly to 16S rRNA central domain where it helps coordinate assembly of the platform of the 30S subunit. This Acaryochloris marina (strain MBIC 11017) protein is Small ribosomal subunit protein uS8.